Consider the following 1421-residue polypeptide: ALK tyrosine kinase receptor homolog scd-2 (1421 aa).

Residues 1-20 form the signal peptide; it reads MRKRRLWWFVVLFRVTLVGA. Residues 21–903 lie on the Extracellular side of the membrane; it reads ILPNETFDVR…DTCEEIQIWT (883 aa). 6 N-linked (GlcNAc...) asparagine glycosylation sites follow: Asn24, Asn44, Asn70, Asn83, Asn119, and Asn201. One can recognise an LDL-receptor class A domain in the interval 300–338; the sequence is QCSRGDQFLCSISANTRCLQNAQCDSRIDCDDESDEMDC. 3 cysteine pairs are disulfide-bonded: Cys301/Cys317, Cys309/Cys329, and Cys323/Cys338. An MAM domain is found at 339-542; the sequence is GNINGTMCDF…NLSFSPTCFE (204 aa). N-linked (GlcNAc...) asparagine glycosylation is found at Asn342, Asn362, Asn495, Asn533, Asn546, Asn633, Asn726, Asn793, Asn849, Asn873, and Asn893. A helical membrane pass occupies residues 904–924; that stretch reads LYNITFLIFAALTIIGALFVV. The Cytoplasmic portion of the chain corresponds to 925–1421; that stretch reads YHYRNREKQM…SVPLLECQTR (497 aa). The Protein kinase domain maps to 976-1261; the sequence is IERGRVLGRG…GMPFPIHPAV (286 aa). ATP-binding positions include 982–990 and Lys1003; that span reads LGRGNFGEV. Asp1106 serves as the catalytic Proton acceptor.

The protein belongs to the protein kinase superfamily. Tyr protein kinase family. Insulin receptor subfamily. In terms of assembly, interacts (via cytoplasmic domain) with fsn-1 (via SPRY domain). As to expression, expressed in AIA sensory neurons.

The protein localises to the cell membrane. It catalyses the reaction L-tyrosyl-[protein] + ATP = O-phospho-L-tyrosyl-[protein] + ADP + H(+). In terms of biological role, probable tyrosine-protein kinase receptor which regulates the dauer/non-dauer developmental decision probably by controlling daf-3 transcriptional activity in parallel or together with the TGF-beta pathway. Regulates integration of conflicting sensory cues in AIA interneurons. May act as a receptor for hen-1. In AWA neurons, together with hen-1, plays a role in regulating olfactory adaptation by controlling the forgetting sensory responses to odorants such as diacetyl. The protein is ALK tyrosine kinase receptor homolog scd-2 of Caenorhabditis elegans.